We begin with the raw amino-acid sequence, 197 residues long: Phosphoheptose isomerase (197 aa).

Positions 37–197 constitute an SIS domain; it reads MLQCLMNDGK…CIDSVLLEGM (161 aa). Substrate is bound at residue 52–54; the sequence is NGG. 2 residues coordinate Zn(2+): His-61 and Glu-65. Substrate contacts are provided by residues Glu-65, 94 to 95, 120 to 122, Ser-125, and Gln-175; these read ND and STS. Zn(2+)-binding residues include Gln-175 and His-183.

The protein belongs to the SIS family. GmhA subfamily. As to quaternary structure, homotetramer. Requires Zn(2+) as cofactor.

It localises to the cytoplasm. It catalyses the reaction 2 D-sedoheptulose 7-phosphate = D-glycero-alpha-D-manno-heptose 7-phosphate + D-glycero-beta-D-manno-heptose 7-phosphate. It functions in the pathway carbohydrate biosynthesis; D-glycero-D-manno-heptose 7-phosphate biosynthesis; D-glycero-alpha-D-manno-heptose 7-phosphate and D-glycero-beta-D-manno-heptose 7-phosphate from sedoheptulose 7-phosphate: step 1/1. In terms of biological role, catalyzes the isomerization of sedoheptulose 7-phosphate in D-glycero-D-manno-heptose 7-phosphate. The protein is Phosphoheptose isomerase of Neisseria meningitidis serogroup C (strain 053442).